A 324-amino-acid chain; its full sequence is Glutathione synthetase (324 aa).

Residues 129–313 (KLYALHFPDL…LEDEIVDWLV (185 aa)) form the ATP-grasp domain. 155 to 211 (VDIHGRAVIKPLDGKGGEGIFLLARADRNLNAIIEASTAYGTRHVMVQRYLEESRQG) serves as a coordination point for ATP. Glu284 and Asn286 together coordinate Mg(2+).

The protein belongs to the prokaryotic GSH synthase family. Requires Mg(2+) as cofactor. The cofactor is Mn(2+).

The enzyme catalyses gamma-L-glutamyl-L-cysteine + glycine + ATP = glutathione + ADP + phosphate + H(+). Its pathway is sulfur metabolism; glutathione biosynthesis; glutathione from L-cysteine and L-glutamate: step 2/2. The polypeptide is Glutathione synthetase (Gloeobacter violaceus (strain ATCC 29082 / PCC 7421)).